The primary structure comprises 338 residues: Glycerol-3-phosphate dehydrogenase [NAD(P)+] (338 aa).

Residues S13, W14, and K108 each contribute to the NADPH site. Residues K108, G139, and S141 each contribute to the sn-glycerol 3-phosphate site. A143 provides a ligand contact to NADPH. K194, D247, S257, R258, and N259 together coordinate sn-glycerol 3-phosphate. Residue K194 is the Proton acceptor of the active site. R258 provides a ligand contact to NADPH. V282 and E284 together coordinate NADPH.

This sequence belongs to the NAD-dependent glycerol-3-phosphate dehydrogenase family.

Its subcellular location is the cytoplasm. It catalyses the reaction sn-glycerol 3-phosphate + NAD(+) = dihydroxyacetone phosphate + NADH + H(+). The catalysed reaction is sn-glycerol 3-phosphate + NADP(+) = dihydroxyacetone phosphate + NADPH + H(+). The protein operates within membrane lipid metabolism; glycerophospholipid metabolism. Catalyzes the reduction of the glycolytic intermediate dihydroxyacetone phosphate (DHAP) to sn-glycerol 3-phosphate (G3P), the key precursor for phospholipid synthesis. This is Glycerol-3-phosphate dehydrogenase [NAD(P)+] from Streptococcus pneumoniae (strain CGSP14).